Reading from the N-terminus, the 164-residue chain is Respiratory growth induced protein 2 (164 aa).

This sequence belongs to the RGI1 family.

It is found in the cytoplasm. Its function is as follows. Involved in the control of energetic metabolism and significantly contribute to cell fitness, especially under respiratory growth conditions. This is Respiratory growth induced protein 2 (RGI2) from Candida glabrata (strain ATCC 2001 / BCRC 20586 / JCM 3761 / NBRC 0622 / NRRL Y-65 / CBS 138) (Yeast).